The chain runs to 223 residues: Flagellar L-ring protein (223 aa).

The N-terminal stretch at 1–18 (MKKSLMALIVVGSFLLSA) is a signal peptide. A lipid anchor (N-palmitoyl cysteine) is attached at cysteine 19. Residue cysteine 19 is the site of S-diacylglycerol cysteine attachment.

The protein belongs to the FlgH family. As to quaternary structure, the basal body constitutes a major portion of the flagellar organelle and consists of four rings (L,P,S, and M) mounted on a central rod.

It localises to the cell outer membrane. The protein localises to the bacterial flagellum basal body. Assembles around the rod to form the L-ring and probably protects the motor/basal body from shearing forces during rotation. This is Flagellar L-ring protein from Herminiimonas arsenicoxydans.